The following is a 239-amino-acid chain: Ribonuclease 3 (239 aa).

An RNase III domain is found at Y18–G141. Residue E54 coordinates Mg(2+). D58 is an active-site residue. Residues S127 and E130 each coordinate Mg(2+). E130 is an active-site residue. Positions D168–E237 constitute a DRBM domain.

It belongs to the ribonuclease III family. Homodimer. Mg(2+) is required as a cofactor.

The protein resides in the cytoplasm. The enzyme catalyses Endonucleolytic cleavage to 5'-phosphomonoester.. In terms of biological role, digests double-stranded RNA. Involved in the processing of primary rRNA transcript to yield the immediate precursors to the large and small rRNAs (23S and 16S). Processes some mRNAs, and tRNAs when they are encoded in the rRNA operon. Processes pre-crRNA and tracrRNA of type II CRISPR loci if present in the organism. This chain is Ribonuclease 3, found in Helicobacter pylori (strain G27).